Reading from the N-terminus, the 194-residue chain is Imidazoleglycerol-phosphate dehydratase (194 aa).

The protein belongs to the imidazoleglycerol-phosphate dehydratase family.

It is found in the cytoplasm. It catalyses the reaction D-erythro-1-(imidazol-4-yl)glycerol 3-phosphate = 3-(imidazol-4-yl)-2-oxopropyl phosphate + H2O. It participates in amino-acid biosynthesis; L-histidine biosynthesis; L-histidine from 5-phospho-alpha-D-ribose 1-diphosphate: step 6/9. The polypeptide is Imidazoleglycerol-phosphate dehydratase (Chlorobaculum parvum (strain DSM 263 / NCIMB 8327) (Chlorobium vibrioforme subsp. thiosulfatophilum)).